Reading from the N-terminus, the 201-residue chain is Small ribosomal subunit protein uS4 (201 aa).

The segment at 1-42 is disordered; the sequence is MARYTGPVTRKSRRLGTDLVGGDQSFEKRPYPPGQHGRARIK. The S4 RNA-binding domain occupies 91–157; that stretch reads SRLDNVVYRA…VPFQIARETA (67 aa).

Belongs to the universal ribosomal protein uS4 family. Part of the 30S ribosomal subunit. Contacts protein S5. The interaction surface between S4 and S5 is involved in control of translational fidelity.

Functionally, one of the primary rRNA binding proteins, it binds directly to 16S rRNA where it nucleates assembly of the body of the 30S subunit. In terms of biological role, with S5 and S12 plays an important role in translational accuracy. This chain is Small ribosomal subunit protein uS4, found in Mycobacterium ulcerans (strain Agy99).